Here is a 378-residue protein sequence, read N- to C-terminus: Odorant receptor Or2 (378 aa).

Methionine 1 is a topological domain (cytoplasmic). A helical membrane pass occupies residues leucine 2–leucine 22. Topologically, residues arginine 23–arginine 29 are extracellular. A helical transmembrane segment spans residues phenylalanine 30–serine 50. Residues serine 51–isoleucine 59 lie on the Cytoplasmic side of the membrane. A helical transmembrane segment spans residues isoleucine 60–isoleucine 80. Residues asparagine 81–serine 120 are Extracellular-facing. The helical transmembrane segment at isoleucine 121–valine 141 threads the bilayer. At proline 142 to glutamine 164 the chain is on the cytoplasmic side. Residues valine 165–threonine 185 form a helical membrane-spanning segment. The Extracellular segment spans residues serine 186 to leucine 254. A helical membrane pass occupies residues cysteine 255 to isoleucine 275. The Cytoplasmic segment spans residues serine 276–glutamine 278. A helical membrane pass occupies residues leucine 279 to phenylalanine 299. Residues tyrosine 300–asparagine 378 are Extracellular-facing. Asparagine 364 is a glycosylation site (N-linked (GlcNAc...) asparagine).

The protein belongs to the insect chemoreceptor superfamily. Heteromeric odorant receptor channel (TC 1.A.69) family. Or30a subfamily. In terms of tissue distribution, expressed in male and female antennae and maxillary palps.

It localises to the cell membrane. Its function is as follows. Odorant receptor which plays a critical role in the anthropophilic host-seeking behavior; establishes the host preference to transmit malaria. The polypeptide is Odorant receptor Or2 (OR2) (Anopheles gambiae (African malaria mosquito)).